A 182-amino-acid chain; its full sequence is CDP-diacylglycerol--glycerol-3-phosphate 3-phosphatidyltransferase (182 aa).

The Cytoplasmic segment spans residues 2-12 (QFNIPTLLTLF). A helical transmembrane segment spans residues 13 to 37 (RVALIPFFVLAFYLPFVWAPLLCAL). At 38–60 (IFVFAAVTDWFDGFLARRWKQTT) the chain is on the periplasmic side. A helical membrane pass occupies residues 61–81 (RFGAFLDPVADKVMVAVALVL). The Cytoplasmic segment spans residues 82–86 (VAEYY). A helical transmembrane segment spans residues 87-107 (HSWWITLPAATMIAREIIISA). The Periplasmic portion of the chain corresponds to 108–145 (LREWMAEIGKRSSVAVSWIGKVKTTAQMMALFALLWRP). The chain crosses the membrane as a helical span at residues 146–168 (ERIVEGIGVAALYIAAVLTFWSM). Residues 169 to 181 (FQYLNAARHDLLE) lie on the Cytoplasmic side of the membrane.

It belongs to the CDP-alcohol phosphatidyltransferase class-I family.

Its subcellular location is the cell inner membrane. It catalyses the reaction a CDP-1,2-diacyl-sn-glycerol + sn-glycerol 3-phosphate = a 1,2-diacyl-sn-glycero-3-phospho-(1'-sn-glycero-3'-phosphate) + CMP + H(+). Its pathway is phospholipid metabolism; phosphatidylglycerol biosynthesis; phosphatidylglycerol from CDP-diacylglycerol: step 1/2. Catalyzes the conversion of cytidine diphosphate diacylglycerol (CDP-DG) and glycerol 3-phosphate into phosphatidylglycerol. Essential for the synthesis of anionic phospholipids, thereby playing a role in balancing the ratio of zwitterionic and anionic phospholipids, which is thought to be important for normal membrane function. This chain is CDP-diacylglycerol--glycerol-3-phosphate 3-phosphatidyltransferase, found in Pectobacterium atrosepticum (strain SCRI 1043 / ATCC BAA-672) (Erwinia carotovora subsp. atroseptica).